A 306-amino-acid polypeptide reads, in one-letter code: TnpB-like protein aq_aa05 (306 aa).

Zn(2+)-binding residues include cysteine 213, cysteine 216, cysteine 234, and cysteine 237.

Belongs to the transposase 35 family.

This Aquifex aeolicus (strain VF5) protein is TnpB-like protein aq_aa05.